Consider the following 92-residue polypeptide: Small ribosomal subunit protein uS19 (92 aa).

This sequence belongs to the universal ribosomal protein uS19 family.

Its function is as follows. Protein S19 forms a complex with S13 that binds strongly to the 16S ribosomal RNA. This Buchnera aphidicola subsp. Acyrthosiphon pisum (strain 5A) protein is Small ribosomal subunit protein uS19.